The chain runs to 972 residues: Microtubule-associated protein 1S (972 aa).

The tract at residues 1–715 (MAAVMAAPEP…SESLPTLSDS (715 aa)) is necessary for the microtubule-organizing center localization. The span at 454–469 (LEVPSRANSQDSLASR) shows a compositional bias: polar residues. The interval 454–632 (LEVPSRANSQ…PHSTEVDESL (179 aa)) is disordered. Residue serine 462 is modified to Phosphoserine. Residues 489–505 (VRREPALATRDQKKDTK) show a composition bias toward basic and acidic residues. Composition is skewed to pro residues over residues 537–550 (APVPAAPPAAPAPE) and 564–581 (PPAPSPTLSPAQSPPPTA). Phosphoserine is present on residues serine 585, serine 590, and serine 592. Residues 600–972 (PDASPSATTP…EAFPACKVEF (373 aa)) are necessary for interaction with RASSF1. A compositionally biased stretch (low complexity) spans 602 to 620 (ASPSATTPTLTTPSLPAEL). A necessary for association with microtubules region spans residues 644 to 879 (DAGLSLPLRL…GGGAGHLDQN (236 aa)). 2 positions are modified to phosphoserine: serine 659 and serine 683. Positions 671–854 (CEFSHRKPPP…SSGPSSRPAP (184 aa)) are disordered. Low complexity predominate over residues 702-721 (PTSVSESLPTLSDSDPVPVA). Serine 723 is modified (phosphoserine). A compositionally biased stretch (pro residues) spans 737-748 (LPTPRVPPPLPD). The segment covering 781 to 800 (ARPSSASAAPRAATVAAKTK) has biased composition (low complexity). The necessary for association with actin stretch occupies residues 874–972 (GHLDQNFFLR…EAFPACKVEF (99 aa)). Positions 880-904 (FFLRVRALCYVISGQGQRQEEGLRG) are necessary for the mitochondrial aggregation and genome destruction.

This sequence belongs to the MAP1A/MAP1B/MAP1S family. In terms of assembly, heterodimer of a heavy and a light chain. Interacts with microtubules and actin. Both MAP1S heavy and light chains interact with microtubules. MAP1S light chain interacts with actin. Interacts with LRPPRC, RASSF1, microtubules and VCY2. Interacts (via C-terminus) with GAN (via Kelch domains). Interacts with WDR47 (via N-terminus of light chain). Interacts with ESR1. In terms of tissue distribution, expressed in cortex cerebellum, dorsal root ganglia, frontal cortex, hippocampus, hypothalamus, mesencephalon, medulla oblongata, occipital cortex, pons, spinal cord, striatum of the brain, neurons, heart, testis and skeletal muscle (at protein level).

It localises to the nucleus. It is found in the cytoplasm. Its subcellular location is the cytosol. The protein localises to the cytoskeleton. The protein resides in the spindle. In terms of biological role, microtubule-associated protein that mediates aggregation of mitochondria resulting in cell death and genomic destruction (MAGD). Plays a role in anchoring the microtubule organizing center to the centrosomes. Binds to DNA. Plays a role in apoptosis. Involved in the formation of microtubule bundles. This chain is Microtubule-associated protein 1S (Map1s), found in Rattus norvegicus (Rat).